Reading from the N-terminus, the 80-residue chain is UPF0248 protein MJ1316 (80 aa).

This sequence belongs to the UPF0248 family.

This Methanocaldococcus jannaschii (strain ATCC 43067 / DSM 2661 / JAL-1 / JCM 10045 / NBRC 100440) (Methanococcus jannaschii) protein is UPF0248 protein MJ1316.